A 117-amino-acid polypeptide reads, in one-letter code: Large ribosomal subunit protein bL17 (117 aa).

Belongs to the bacterial ribosomal protein bL17 family. In terms of assembly, part of the 50S ribosomal subunit. Contacts protein L32.

In Campylobacter lari (strain RM2100 / D67 / ATCC BAA-1060), this protein is Large ribosomal subunit protein bL17.